The following is a 373-amino-acid chain: Cathecol O-methyltransferase 1 (373 aa).

Residues Gly209, Asp232, Asp252, Met253, Met265, and Lys266 each coordinate S-adenosyl-L-homocysteine. Position 232 (Asp232) interacts with S-adenosyl-L-methionine. The Proton acceptor role is filled by His279.

Belongs to the class I-like SAM-binding methyltransferase superfamily. Cation-independent O-methyltransferase family. COMT subfamily.

It catalyses the reaction catechol + S-adenosyl-L-methionine = guaiacol + S-adenosyl-L-homocysteine + H(+). Functionally, O-methyltransferase that catalyzes the conversion of catechol to guaiacol. Involved in the production of guaiacol in fruits. This is Cathecol O-methyltransferase 1 from Solanum lycopersicum (Tomato).